We begin with the raw amino-acid sequence, 434 residues long: 3-phosphoshikimate 1-carboxyvinyltransferase (434 aa).

3 residues coordinate 3-phosphoshikimate: lysine 22, serine 23, and arginine 27. Lysine 22 is a phosphoenolpyruvate binding site. Phosphoenolpyruvate-binding residues include glycine 93 and arginine 121. Positions 168, 169, 170, 199, 320, and 347 each coordinate 3-phosphoshikimate. Glutamine 170 is a binding site for phosphoenolpyruvate. The active-site Proton acceptor is aspartate 320. Positions 351, 395, and 420 each coordinate phosphoenolpyruvate.

Belongs to the EPSP synthase family. In terms of assembly, monomer.

It localises to the cytoplasm. The enzyme catalyses 3-phosphoshikimate + phosphoenolpyruvate = 5-O-(1-carboxyvinyl)-3-phosphoshikimate + phosphate. It participates in metabolic intermediate biosynthesis; chorismate biosynthesis; chorismate from D-erythrose 4-phosphate and phosphoenolpyruvate: step 6/7. In terms of biological role, catalyzes the transfer of the enolpyruvyl moiety of phosphoenolpyruvate (PEP) to the 5-hydroxyl of shikimate-3-phosphate (S3P) to produce enolpyruvyl shikimate-3-phosphate and inorganic phosphate. This is 3-phosphoshikimate 1-carboxyvinyltransferase from Cupriavidus necator (strain ATCC 17699 / DSM 428 / KCTC 22496 / NCIMB 10442 / H16 / Stanier 337) (Ralstonia eutropha).